The sequence spans 477 residues: Bifunctional protein HldE (477 aa).

The tract at residues 1–318 is ribokinase; sequence MKVTLPEFER…ENAVRGRADT (318 aa). Residue K179 is modified to N6-acetyllysine. ATP is bound at residue 195-198; that stretch reads NLSE. Residue D264 is part of the active site. The segment at 344–477 is cytidylyltransferase; that stretch reads MTNGVFDILH…IKKIQQDKKG (134 aa).

It in the N-terminal section; belongs to the carbohydrate kinase PfkB family. The protein in the C-terminal section; belongs to the cytidylyltransferase family. In terms of assembly, homodimer.

The catalysed reaction is D-glycero-beta-D-manno-heptose 7-phosphate + ATP = D-glycero-beta-D-manno-heptose 1,7-bisphosphate + ADP + H(+). It catalyses the reaction D-glycero-beta-D-manno-heptose 1-phosphate + ATP + H(+) = ADP-D-glycero-beta-D-manno-heptose + diphosphate. Its pathway is nucleotide-sugar biosynthesis; ADP-L-glycero-beta-D-manno-heptose biosynthesis; ADP-L-glycero-beta-D-manno-heptose from D-glycero-beta-D-manno-heptose 7-phosphate: step 1/4. It functions in the pathway nucleotide-sugar biosynthesis; ADP-L-glycero-beta-D-manno-heptose biosynthesis; ADP-L-glycero-beta-D-manno-heptose from D-glycero-beta-D-manno-heptose 7-phosphate: step 3/4. Its function is as follows. Catalyzes the phosphorylation of D-glycero-D-manno-heptose 7-phosphate at the C-1 position to selectively form D-glycero-beta-D-manno-heptose-1,7-bisphosphate. Catalyzes the ADP transfer from ATP to D-glycero-beta-D-manno-heptose 1-phosphate, yielding ADP-D-glycero-beta-D-manno-heptose. This chain is Bifunctional protein HldE, found in Escherichia coli O17:K52:H18 (strain UMN026 / ExPEC).